A 904-amino-acid polypeptide reads, in one-letter code: uncharacterized protein (904 aa).

Disordered regions lie at residues 247 to 275 (KIGK…SLEF) and 328 to 360 (GDSQ…HHFS). Residues 342-360 (GAQTLSPTSHPSSANHHFS) are compositionally biased toward polar residues. The chain crosses the membrane as a helical span at residues 778–798 (VVQGMILMFAGGKLIFGGRVL).

It is found in the membrane. This is an uncharacterized protein from Homo sapiens (Human).